Reading from the N-terminus, the 1164-residue chain is Integrin alpha-5 (1164 aa).

Basic and acidic residues predominate over residues 1–14; sequence MREEGGGSREKEGE. Residues 1-119 form a disordered region; that stretch reads MREEGGGSRE…MGSRTPGSPL (119 aa). The span at 81–90 shows a compositional bias: low complexity; the sequence is LLPALSHSPL. The FG-GAP 1 repeat unit spans residues 156–221; that stretch reads NLDAEAPAVL…CPWGTSPAQC (66 aa). A glycan (N-linked (GlcNAc...) asparagine) is linked at N197. A disulfide bridge connects residues C212 and C221. Position 240 is a phosphoserine (S240). FG-GAP repeat units follow at residues 241-301, 306-358, 372-424, 425-490, 491-550, and 554-617; these read SEGE…QILE, RSDF…AESY, QTRQ…GSDI, RSLY…GMEP, TPTL…GLAS, and QVLL…IFPA. A disulfide bond links C269 and C289. N295 carries N-linked (GlcNAc...) asparagine glycosylation. A disulfide bridge links C305 with C318. The a protein site is built by Q375 and D382. Positions 393, 395, 397, and 401 each coordinate Ca(2+). N-linked (GlcNAc...) asparagine glycans are attached at residues N410, N420, and N429. Positions 447, 449, 451, 453, 455, 514, 516, 518, 520, 522, 578, 580, 582, 584, and 586 each coordinate Ca(2+). C626 and C635 are disulfide-bonded. N-linked (GlcNAc...) asparagine glycosylation is found at N637, N643, N706, and N722. An intrachain disulfide couples C641 to C697. C758 and C764 are disulfide-bonded. 5 N-linked (GlcNAc...) asparagine glycosylation sites follow: N788, N825, N837, N886, and N982. C831 and C844 are oxidised to a cystine. Disulfide bonds link C962–C1072, C983–C1036, and C1026–C1031. Residues 983-1022 are disordered; that stretch reads CTTSHPPNPEGLELDPEGSQHHRLQRRDVPGRSPASSGPQ. A helical transmembrane segment spans residues 1114-1134; it reads LWIIILAILIGLLLLGLLIYI. Topologically, residues 1135–1164 are cytoplasmic; that stretch reads LYKLGFFKRSLPYGTAMEKAQLKPPATSDA. The interaction with HPS5 stretch occupies residues 1136 to 1143; sequence YKLGFFKR. Residues 1139 to 1143 carry the GFFKR motif motif; the sequence is GFFKR.

Belongs to the integrin alpha chain family. In terms of assembly, heterodimer of an alpha and a beta subunit. The alpha subunit is composed of a heavy and a light chain linked by a disulfide bond. Alpha-5 associates with beta-1. Interacts with NISCH. Interacts with HPS5. Interacts with RAB21 and COMP. Interacts with CIB1. ITGA5:ITGB1 interacts with CCN3. ITGA5:ITGB1 interacts with FBN1. ITGA5:ITGB1 interacts with IL1B. ITGA5:ITGB1 interacts with ACE2. ITGA5:ITGB1 interacts with SELP. Interacts with ANGPT2. ITGA5:ITGB1 interacts with IGFBP2. ITGA5:ITGB1 interacts with IGFBP1. Proteolytic cleavage by PCSK5 mediates activation of the precursor.

It localises to the cell membrane. Its subcellular location is the cell junction. It is found in the focal adhesion. Functionally, integrin alpha-5/beta-1 (ITGA5:ITGB1) is a receptor for fibronectin and fibrinogen. It recognizes the sequence R-G-D in its ligands. ITGA5:ITGB1 binds to PLA2G2A via a site (site 2) which is distinct from the classical ligand-binding site (site 1) and this induces integrin conformational changes and enhanced ligand binding to site 1. ITGA5:ITGB1 acts as a receptor for fibrillin-1 (FBN1) and mediates R-G-D-dependent cell adhesion to FBN1. ITGA5:ITGB1 acts as a receptor for fibronectin (FN1) and mediates R-G-D-dependent cell adhesion to FN1. ITGA5:ITGB1 is a receptor for IL1B and binding is essential for IL1B signaling. ITGA5:ITGB3 is a receptor for soluble CD40LG and is required for CD40/CD40LG signaling. The polypeptide is Integrin alpha-5 (ITGA5) (Bos taurus (Bovine)).